The primary structure comprises 313 residues: T-box protein 37 (313 aa).

Residues 19-195 (IWEKFYPKTE…HNKFASGFRS (177 aa)) constitute a DNA-binding region (T-box). The tract at residues 193-228 (FRSNGKRRLSSESENSENSPPKRSASAISSLTPPAI) is disordered.

It is found in the nucleus. Transcription factor. Required for mesodermal induction, acting redundantly with transcription factor tbx-38. Together with tbx-38, acts by inducing cell fates in the AB lineage, thereby playing a role in development of the anterior pharynx. The sequence is that of T-box protein 37 (tbx-37) from Caenorhabditis elegans.